The following is a 579-amino-acid chain: Probable zinc metalloprotease EGY1, chloroplastic (579 aa).

Disordered stretches follow at residues 1 to 42 (MAAA…PASA) and 78 to 146 (GGGG…NEPP). Residues 1-44 (MAAAAAALASSPMVHLTASRLRLPRPARSPAAATPSPSPASAAC) constitute a chloroplast transit peptide. Residues 16–42 (LTASRLRLPRPARSPAAATPSPSPASA) show a composition bias toward low complexity. The span at 78 to 92 (GGGGGGGGGGGGTGG) shows a compositional bias: gly residues. 2 stretches are compositionally biased toward low complexity: residues 104 to 115 (AAAAEAKVGGAV) and 125 to 137 (SGSF…SSSG). The next 8 membrane-spanning stretches (helical) occupy residues 272 to 292 (YVIS…LGIA), 321 to 341 (LLPF…IQLF), 357 to 377 (LSIP…ITQF), 392 to 412 (MAGP…GLLL), 419 to 439 (ASDL…LGLV), 452 to 472 (ATVA…TTAF), 505 to 525 (LLGL…YVLI), and 547 to 567 (AALI…WDEL).

It belongs to the peptidase M50B family.

The protein localises to the plastid. It localises to the chloroplast membrane. In terms of biological role, probable membrane-associated metalloprotease that may be involved in chloroplast development. This Oryza sativa subsp. japonica (Rice) protein is Probable zinc metalloprotease EGY1, chloroplastic (EGY1).